We begin with the raw amino-acid sequence, 843 residues long: Protein P (843 aa).

Residues 1 to 177 (MPLSYQHFRK…FCGSPYSWEQ (177 aa)) form a terminal protein domain (TP) region. Residues 178–346 (DLQHGRLVFQ…YCLCHIVNLI (169 aa)) are spacer. Disordered regions lie at residues 220 to 269 (KSRL…HNCA) and 291 to 316 (TSKG…RSRS). The interval 347–690 (EDWGPCTEHG…YLNLYPVARQ (344 aa)) is polymerase/reverse transcriptase domain (RT). The Reverse transcriptase domain occupies 357 to 600 (EHRIRTPRTP…YSLNFMGYVI (244 aa)). D429, D551, and D552 together coordinate Mg(2+).

It belongs to the hepadnaviridae P protein family.

The enzyme catalyses DNA(n) + a 2'-deoxyribonucleoside 5'-triphosphate = DNA(n+1) + diphosphate. It carries out the reaction Endonucleolytic cleavage to 5'-phosphomonoester.. Its activity is regulated as follows. Activated by host HSP70 and HSP40 in vitro to be able to bind the epsilon loop of the pgRNA. Because deletion of the RNase H region renders the protein partly chaperone-independent, the chaperones may be needed indirectly to relieve occlusion of the RNA-binding site by this domain. Inhibited by several reverse-transcriptase inhibitors: Lamivudine, Adefovir and Entecavir. Functionally, multifunctional enzyme that converts the viral RNA genome into dsDNA in viral cytoplasmic capsids. This enzyme displays a DNA polymerase activity that can copy either DNA or RNA templates, and a ribonuclease H (RNase H) activity that cleaves the RNA strand of RNA-DNA heteroduplexes in a partially processive 3'- to 5'-endonucleasic mode. Neo-synthesized pregenomic RNA (pgRNA) are encapsidated together with the P protein, and reverse-transcribed inside the nucleocapsid. Initiation of reverse-transcription occurs first by binding the epsilon loop on the pgRNA genome, and is initiated by protein priming, thereby the 5'-end of (-)DNA is covalently linked to P protein. Partial (+)DNA is synthesized from the (-)DNA template and generates the relaxed circular DNA (RC-DNA) genome. After budding and infection, the RC-DNA migrates in the nucleus, and is converted into a plasmid-like covalently closed circular DNA (cccDNA). The activity of P protein does not seem to be necessary for cccDNA generation, and is presumably released from (+)DNA by host nuclear DNA repair machinery. The polypeptide is Protein P (Homo sapiens (Human)).